We begin with the raw amino-acid sequence, 435 residues long: Serine--tRNA ligase (435 aa).

L-serine is bound at residue 233–235 (TAE). Residue 264-266 (RAE) coordinates ATP. Glu-287 is an L-serine binding site. Residue 351 to 354 (EISS) coordinates ATP. An L-serine-binding site is contributed by Ser-386.

It belongs to the class-II aminoacyl-tRNA synthetase family. Type-1 seryl-tRNA synthetase subfamily. Homodimer. The tRNA molecule binds across the dimer.

It is found in the cytoplasm. It carries out the reaction tRNA(Ser) + L-serine + ATP = L-seryl-tRNA(Ser) + AMP + diphosphate + H(+). The enzyme catalyses tRNA(Sec) + L-serine + ATP = L-seryl-tRNA(Sec) + AMP + diphosphate + H(+). It participates in aminoacyl-tRNA biosynthesis; selenocysteinyl-tRNA(Sec) biosynthesis; L-seryl-tRNA(Sec) from L-serine and tRNA(Sec): step 1/1. Functionally, catalyzes the attachment of serine to tRNA(Ser). Is also able to aminoacylate tRNA(Sec) with serine, to form the misacylated tRNA L-seryl-tRNA(Sec), which will be further converted into selenocysteinyl-tRNA(Sec). This is Serine--tRNA ligase from Anaeromyxobacter sp. (strain K).